The chain runs to 266 residues: MTKKKLPVRFTGQHFTIDKVLIKDAIRQANISNQDTVLDIGAGKGFLTVHLLKIANNVVAIENDTALVEHLRKLFSDARNVQVVGCDFRNFAVPKFPFKVVSNIPYGITSDIFKILMFESLGNFLGGSIVLQLEPTQKLFSRKLYNPYTVFYHTFFDLKLVYEVGPESFLPPPTVKSALLNIKRKHLFFDFKFKAKYLAFISYLLEKPDLSVKTALKSIFRKSQVRSISEKFGLNLNAQIVCLSPSQWLNCFLEMLEVVPEKFHPS.

Histidine 14, threonine 16, glycine 41, glutamate 62, aspartate 87, and asparagine 103 together coordinate S-adenosyl-L-methionine.

Belongs to the class I-like SAM-binding methyltransferase superfamily. rRNA adenine N(6)-methyltransferase family.

Involved in erythromycin resistance. This chain is rRNA adenine N-6-methyltransferase (ermF), found in Bacteroides fragilis.